A 335-amino-acid chain; its full sequence is Glycerol-3-phosphate dehydrogenase [NAD(P)+] (335 aa).

Residues S12, W13, R33, R34, and K107 each contribute to the NADPH site. The sn-glycerol 3-phosphate site is built by K107, G134, and S136. A138 serves as a coordination point for NADPH. Positions 189, 242, 252, 253, and 254 each coordinate sn-glycerol 3-phosphate. Residue K189 is the Proton acceptor of the active site. R253 lines the NADPH pocket. 2 residues coordinate NADPH: V277 and E279.

This sequence belongs to the NAD-dependent glycerol-3-phosphate dehydrogenase family.

It is found in the cytoplasm. It carries out the reaction sn-glycerol 3-phosphate + NAD(+) = dihydroxyacetone phosphate + NADH + H(+). It catalyses the reaction sn-glycerol 3-phosphate + NADP(+) = dihydroxyacetone phosphate + NADPH + H(+). It functions in the pathway membrane lipid metabolism; glycerophospholipid metabolism. Its function is as follows. Catalyzes the reduction of the glycolytic intermediate dihydroxyacetone phosphate (DHAP) to sn-glycerol 3-phosphate (G3P), the key precursor for phospholipid synthesis. The chain is Glycerol-3-phosphate dehydrogenase [NAD(P)+] from Moorella thermoacetica (strain ATCC 39073 / JCM 9320).